We begin with the raw amino-acid sequence, 281 residues long: Histidine biosynthesis bifunctional protein hisIE, chloroplastic (281 aa).

A chloroplast-targeting transit peptide spans 1 to 50 (MAVSYNALAQSLARSSCFIPKPYSFRDTKLRSRSNVVFACNDNKNIALQA). The interval 51-178 (KVDNLLDRIK…NKLALTTLYS (128 aa)) is phosphoribosyl-AMP cyclohydrolase. Residues 179–281 (LESIISKRKE…GIEEKQNRTK (103 aa)) form a phosphoribosyl-ATP pyrophosphohydrolase region.

This sequence in the N-terminal section; belongs to the PRA-CH family. The protein in the C-terminal section; belongs to the PRA-PH family. Ubiquitously expressed throughout development.

It is found in the plastid. It localises to the chloroplast. It carries out the reaction 1-(5-phospho-beta-D-ribosyl)-ATP + H2O = 1-(5-phospho-beta-D-ribosyl)-5'-AMP + diphosphate + H(+). It catalyses the reaction 1-(5-phospho-beta-D-ribosyl)-5'-AMP + H2O = 1-(5-phospho-beta-D-ribosyl)-5-[(5-phospho-beta-D-ribosylamino)methylideneamino]imidazole-4-carboxamide. The protein operates within amino-acid biosynthesis; L-histidine biosynthesis; L-histidine from 5-phospho-alpha-D-ribose 1-diphosphate: step 2/9. Its pathway is amino-acid biosynthesis; L-histidine biosynthesis; L-histidine from 5-phospho-alpha-D-ribose 1-diphosphate: step 3/9. The chain is Histidine biosynthesis bifunctional protein hisIE, chloroplastic (HISN2) from Arabidopsis thaliana (Mouse-ear cress).